The primary structure comprises 646 residues: Zinc finger protein 493 (646 aa).

The segment at 26–48 (FQCDKYVKVFHKLLNSNRHNTKH) adopts a C2H2-type 1; degenerate zinc-finger fold. C2H2-type zinc fingers lie at residues 54–76 (FKCKKCGKSFCMLLHLCQHKRIH) and 82–104 (YRCEECGKAFIWFSTLTRHRRVH). Residues 109-131 (SYKYECGKSFNQDSNLTTHKRIH) form a C2H2-type 4; degenerate zinc finger. The segment at 137-159 (YKCEECGTSFYQFSYLTRHKLIH) adopts a C2H2-type 5 zinc-finger fold. Residues 165 to 187 (YKCEQYGKTFNQSSTLTGHKIIH) form a C2H2-type 6; degenerate zinc finger. The C2H2-type 7; degenerate zinc finger occupies 193 to 215 (YKCEECGKAFSIFSTPTKHKIIH). The C2H2-type 8; degenerate zinc finger occupies 221–243 (HRCEEYCKAYKESSHLTTHKRIH). 14 consecutive C2H2-type zinc fingers follow at residues 249 to 271 (YKCEECGKAFSIFSTLTKHKIIH), 277 to 299 (HRCEECGKAYKESSHLTTHKRIH), 305 to 327 (YKCEECGKTFSVFSILTKHKIIH), 333 to 355 (YKCEECGKAFKRSSTLTKHRIIH), 361 to 383 (YKCEECGKAFNQSSTLSIHKIIH), 389 to 411 (YKCEECGKAFKRSSTLTIHKMIH), 417 to 439 (YKCEECGKAFNRSSHLTTHKRIH), 445 to 467 (YKCKECGKSFSVFSTLTKHKIIH), 473 to 495 (YKCEECGKAFNRSSILSIHKKIH), 501 to 523 (YKCEECGKAFKRSSHLAGHKQIH), 529 to 551 (YKCEECGKAFSIFSTLTKHKIIH), 557 to 579 (YKCEKCGKTFYRFSNLNTHKIIH), 585 to 607 (CKCEECGKAFNHSSNLIKHKLIH), and 613 to 635 (YKCEACGKAFRRSSHLSRHKIIH).

The protein resides in the nucleus. Its function is as follows. May be involved in transcriptional regulation. The sequence is that of Zinc finger protein 493 (ZNF493) from Homo sapiens (Human).